We begin with the raw amino-acid sequence, 562 residues long: NAD-dependent malic enzyme (562 aa).

Residue Tyr-101 is the Proton donor of the active site. NAD(+) is bound at residue Arg-154. Lys-172 serves as the catalytic Proton acceptor. A divalent metal cation contacts are provided by Glu-243, Asp-244, and Asp-267. Residues Asp-267 and Asn-415 each contribute to the NAD(+) site.

The protein belongs to the malic enzymes family. Homotetramer. Requires Mg(2+) as cofactor. Mn(2+) is required as a cofactor.

It catalyses the reaction (S)-malate + NAD(+) = pyruvate + CO2 + NADH. The enzyme catalyses oxaloacetate + H(+) = pyruvate + CO2. The sequence is that of NAD-dependent malic enzyme from Shewanella frigidimarina (strain NCIMB 400).